A 150-amino-acid polypeptide reads, in one-letter code: Ribonuclease HI (150 aa).

The RNase H type-1 domain maps to 1–141; that stretch reads MKLINAYTDG…VDVLARGQAM (141 aa). Mg(2+)-binding residues include D9, E47, D69, and D133.

This sequence belongs to the RNase H family. Monomer. It depends on Mg(2+) as a cofactor.

The protein resides in the cytoplasm. The catalysed reaction is Endonucleolytic cleavage to 5'-phosphomonoester.. In terms of biological role, endonuclease that specifically degrades the RNA of RNA-DNA hybrids. In Xylella fastidiosa (strain Temecula1 / ATCC 700964), this protein is Ribonuclease HI.